The primary structure comprises 394 residues: Probable purine permease 8 (394 aa).

10 consecutive transmembrane segments (helical) span residues 45 to 65, 77 to 97, 113 to 133, 139 to 159, 172 to 192, 208 to 228, 247 to 267, 289 to 309, 315 to 335, and 344 to 364; these read WLRISIYVFFVLACQALSTIL, TWMGTLVQLIGFPVLFLFRFF, FSSFTILGSVYIVTGLLVSAN, VGLLYLPVSTFSLILASQLAF, FTPFIVNSLFLLTISSALLVV, VIGIICTIGASAGIGLLLSLV, LVAYQSLVASCVVLIGLFASG, TLASIAISWQVYTIGVVGLIF, FSNSITAVGLPIVPVVAVIVF, and IFSIILAIWGFISFVYQHYLD. Positions 373-394 are disordered; it reads TSPVGDPHLLPAEEGHTNIHSV. Basic and acidic residues predominate over residues 383 to 394; that stretch reads PAEEGHTNIHSV.

The protein belongs to the purine permeases (TC 2.A.7.14) family.

It localises to the membrane. This Arabidopsis thaliana (Mouse-ear cress) protein is Probable purine permease 8 (PUP8).